The following is a 250-amino-acid chain: Hydroxyethylthiazole kinase (250 aa).

Substrate is bound at residue Met-39. The ATP site is built by Arg-114 and Thr-159. A substrate-binding site is contributed by Gly-186.

This sequence belongs to the Thz kinase family. The cofactor is Mg(2+).

The catalysed reaction is 5-(2-hydroxyethyl)-4-methylthiazole + ATP = 4-methyl-5-(2-phosphooxyethyl)-thiazole + ADP + H(+). The protein operates within cofactor biosynthesis; thiamine diphosphate biosynthesis; 4-methyl-5-(2-phosphoethyl)-thiazole from 5-(2-hydroxyethyl)-4-methylthiazole: step 1/1. Functionally, catalyzes the phosphorylation of the hydroxyl group of 4-methyl-5-beta-hydroxyethylthiazole (THZ). The chain is Hydroxyethylthiazole kinase from Lactococcus lactis subsp. cremoris (strain MG1363).